The following is a 351-amino-acid chain: CREB homolog crh-2 (351 aa).

2 disordered regions span residues 46–104 (EPCT…EPLG) and 119–149 (SPSATSSHSPSSYGMMHGSHSMASHQLHQQQ). Residues 82–95 (GSSSGSPSSSLSSP) show a composition bias toward low complexity. A bZIP domain is found at 282–345 (SLKIVRRKIK…RDLQQKLHQY (64 aa)). The tract at residues 284-304 (KIVRRKIKNKLSAQESRRKRK) is basic motif. The leucine-zipper stretch occupies residues 307–314 (IDALEGRL).

Belongs to the bZIP family.

The protein localises to the nucleus. Transcription factor. Plays a role in regulating the developmentally arrested larval state known as dauer, when induced by long-term exposure to the Gram-negative bacterium P.aeruginosa PAO1, but dispensable for dauer formation induced by starvation. Involved in regulating expression of microRNA mir-243, during long-term exposure to P.aeruginosa PAO1. This Caenorhabditis elegans protein is CREB homolog crh-2.